Reading from the N-terminus, the 1001-residue chain is RNA-binding protein 12B (1001 aa).

Phosphoserine is present on residues S98, S101, and S112. K114 participates in a covalent cross-link: Glycyl lysine isopeptide (Lys-Gly) (interchain with G-Cter in SUMO2). Residues 119–128 (NSGYGSSINQ) are compositionally biased toward polar residues. The interval 119-147 (NSGYGSSINQDAGFHTNGTGHGNLRPRKT) is disordered. K151 is covalently cross-linked (Glycyl lysine isopeptide (Lys-Gly) (interchain with G-Cter in SUMO2)). The RRM 1 domain maps to 155-230 (PYLFLRGLPY…RFIEVMQGSE (76 aa)). Positions 247–262 (LRRSEEHSPPRGINDR) are enriched in basic and acidic residues. The segment at 247-278 (LRRSEEHSPPRGINDRHFRKRSHSKSPRRTRS) is disordered. A phosphoserine mark is found at S250 and S254. Positions 263–278 (HFRKRSHSKSPRRTRS) are enriched in basic residues. Residue T276 is modified to Phosphothreonine. Residues S278, S280, S292, and S294 each carry the phosphoserine modification. In terms of domain architecture, RRM 2 spans 284–360 (FYVHLKNLSL…RPVHIDPISR (77 aa)). K319 bears the N6-acetyllysine mark. K335 is covalently cross-linked (Glycyl lysine isopeptide (Lys-Gly) (interchain with G-Cter in SUMO2)). Phosphoserine is present on S377. The RRM 3 domain maps to 400–477 (LCIYIRNFPF…TEVLLRLISE (78 aa)). Glycyl lysine isopeptide (Lys-Gly) (interchain with G-Cter in SUMO2) cross-links involve residues K514 and K541. The interval 544-587 (QRDFRQPDRHPPEDFRHSSEDFRFPPEDFRHSPEDFRRPREEDF) is disordered. Residues S575, S591, and S638 each carry the phosphoserine modification. Residues 631–881 (LEEDFRRSPT…FRSPPDDFRS (251 aa)) are compositionally biased toward basic and acidic residues. The disordered stretch occupies residues 631-882 (LEEDFRRSPT…RSPPDDFRSH (252 aa)). T640 carries the phosphothreonine modification. Phosphoserine occurs at positions 710 and 718. Residue K895 forms a Glycyl lysine isopeptide (Lys-Gly) (interchain with G-Cter in SUMO2) linkage. The RRM 4 domain occupies 925–1001 (TPIKIMNLPF…GPRKVKLTLL (77 aa)).

The polypeptide is RNA-binding protein 12B (RBM12B) (Homo sapiens (Human)).